A 149-amino-acid polypeptide reads, in one-letter code: Large ribosomal subunit protein bL9 (149 aa).

The protein belongs to the bacterial ribosomal protein bL9 family.

In terms of biological role, binds to the 23S rRNA. The sequence is that of Large ribosomal subunit protein bL9 from Proteus mirabilis (strain HI4320).